The primary structure comprises 185 residues: Elongation factor P (185 aa).

The protein belongs to the elongation factor P family.

Its subcellular location is the cytoplasm. It functions in the pathway protein biosynthesis; polypeptide chain elongation. Its function is as follows. Involved in peptide bond synthesis. Stimulates efficient translation and peptide-bond synthesis on native or reconstituted 70S ribosomes in vitro. Probably functions indirectly by altering the affinity of the ribosome for aminoacyl-tRNA, thus increasing their reactivity as acceptors for peptidyl transferase. This Desulfitobacterium hafniense (strain DSM 10664 / DCB-2) protein is Elongation factor P.